A 119-amino-acid polypeptide reads, in one-letter code: Holo-[acyl-carrier-protein] synthase (119 aa).

2 residues coordinate Mg(2+): Asp8 and Glu58.

Belongs to the P-Pant transferase superfamily. AcpS family. The cofactor is Mg(2+).

The protein localises to the cytoplasm. It catalyses the reaction apo-[ACP] + CoA = holo-[ACP] + adenosine 3',5'-bisphosphate + H(+). Its function is as follows. Transfers the 4'-phosphopantetheine moiety from coenzyme A to a Ser of acyl-carrier-protein. The chain is Holo-[acyl-carrier-protein] synthase from Oceanobacillus iheyensis (strain DSM 14371 / CIP 107618 / JCM 11309 / KCTC 3954 / HTE831).